The following is a 916-amino-acid chain: Internalin J (916 aa).

A signal peptide spans 1–25 (MKTSKIIIASLVSLTLVSNPILTFA). 14 LRR repeats span residues 94–115 (TLTS…EKLT), 116–136 (GLTK…SQNT), 137–157 (NLTY…TPLT), 158–179 (KLTY…QNPL), 180–200 (LTYL…HNTQ), 201–221 (LTEL…TPQT), 222–243 (QLTT…QNKL), 244–263 (LNRL…NQNI), 264–284 (QLTF…TPLT), 285–306 (QLTY…TLSK), 316–325 (DLLEIDLTHN), 338–357 (KIKE…DCQA), 359–368 (GITELDLSQN), and 380–402 (ELTK…NAHI). MucBP domains are found at residues 506–568 (PIKG…SQSV), 576–638 (IVAA…SQTV), 646–708 (IVAA…AQTV), 717–779 (APEK…SQTV), and 787–849 (IVAA…AQTV). A disordered region spans residues 862-888 (PLPDKKTTKPSNLKTTEVKKASDTLPK). The LPXTG sorting signal signature appears at 886-890 (LPKTG). Pentaglycyl murein peptidoglycan amidated threonine is present on Thr889. The propeptide at 890-916 (GDSTPWKSALLGVFLSSTALVIWKKKK) is removed by sortase.

Belongs to the internalin family.

The protein localises to the secreted. Its subcellular location is the cell wall. In terms of biological role, involved in several steps of L.monocytogenes infection, probably improves adhesin to host cells. This chain is Internalin J (inlJ), found in Listeria monocytogenes serotype 4b (strain F2365).